We begin with the raw amino-acid sequence, 157 residues long: Small ribosomal subunit protein uS7 (157 aa).

Belongs to the universal ribosomal protein uS7 family. Part of the 30S ribosomal subunit. Contacts proteins S9 and S11.

One of the primary rRNA binding proteins, it binds directly to 16S rRNA where it nucleates assembly of the head domain of the 30S subunit. Is located at the subunit interface close to the decoding center, probably blocks exit of the E-site tRNA. The polypeptide is Small ribosomal subunit protein uS7 (Opitutus terrae (strain DSM 11246 / JCM 15787 / PB90-1)).